The primary structure comprises 542 residues: Chaperonin GroEL 3 (542 aa).

Residues 29–32 (TLGP), 86–90 (DGTTT), Gly413, 477–479 (NAA), and Asp493 each bind ATP.

Belongs to the chaperonin (HSP60) family. In terms of assembly, forms a cylinder of 14 subunits composed of two heptameric rings stacked back-to-back. Interacts with the co-chaperonin GroES.

It localises to the cytoplasm. The catalysed reaction is ATP + H2O + a folded polypeptide = ADP + phosphate + an unfolded polypeptide.. In terms of biological role, together with its co-chaperonin GroES, plays an essential role in assisting protein folding. The GroEL-GroES system forms a nano-cage that allows encapsulation of the non-native substrate proteins and provides a physical environment optimized to promote and accelerate protein folding. This chain is Chaperonin GroEL 3, found in Frankia alni (strain DSM 45986 / CECT 9034 / ACN14a).